The chain runs to 340 residues: N-acetyl-gamma-glutamyl-phosphate reductase (340 aa).

Cys147 is an active-site residue.

It belongs to the NAGSA dehydrogenase family. Type 1 subfamily.

It is found in the cytoplasm. It carries out the reaction N-acetyl-L-glutamate 5-semialdehyde + phosphate + NADP(+) = N-acetyl-L-glutamyl 5-phosphate + NADPH + H(+). Its pathway is amino-acid biosynthesis; L-arginine biosynthesis; N(2)-acetyl-L-ornithine from L-glutamate: step 3/4. Catalyzes the NADPH-dependent reduction of N-acetyl-5-glutamyl phosphate to yield N-acetyl-L-glutamate 5-semialdehyde. In Lactococcus lactis subsp. lactis (strain IL1403) (Streptococcus lactis), this protein is N-acetyl-gamma-glutamyl-phosphate reductase.